A 1377-amino-acid chain; its full sequence is DNA-directed RNA polymerase subunit beta (1377 aa).

Belongs to the RNA polymerase beta chain family. As to quaternary structure, the RNAP catalytic core consists of 2 alpha, 1 beta, 1 beta' and 1 omega subunit. When a sigma factor is associated with the core the holoenzyme is formed, which can initiate transcription.

The enzyme catalyses RNA(n) + a ribonucleoside 5'-triphosphate = RNA(n+1) + diphosphate. DNA-dependent RNA polymerase catalyzes the transcription of DNA into RNA using the four ribonucleoside triphosphates as substrates. The chain is DNA-directed RNA polymerase subunit beta from Brucella abortus (strain S19).